The chain runs to 335 residues: ADP-L-glycero-D-manno-heptose-6-epimerase (335 aa).

NADP(+) is bound by residues 11 to 12, 32 to 33, Lys-39, 75 to 79, and Asn-92; these read FI, DD, and EGACS. Tyr-139 (proton acceptor) is an active-site residue. Residue Lys-143 participates in NADP(+) binding. Asn-172 lines the substrate pocket. NADP(+)-binding residues include Val-173 and Lys-181. Lys-181 serves as the catalytic Proton acceptor. Substrate is bound by residues Arg-183, His-190, 204–207, Arg-217, and Tyr-296; that span reads FGDY.

Belongs to the NAD(P)-dependent epimerase/dehydratase family. HldD subfamily. As to quaternary structure, homopentamer. Requires NADP(+) as cofactor.

It carries out the reaction ADP-D-glycero-beta-D-manno-heptose = ADP-L-glycero-beta-D-manno-heptose. It participates in nucleotide-sugar biosynthesis; ADP-L-glycero-beta-D-manno-heptose biosynthesis; ADP-L-glycero-beta-D-manno-heptose from D-glycero-beta-D-manno-heptose 7-phosphate: step 4/4. In terms of biological role, catalyzes the interconversion between ADP-D-glycero-beta-D-manno-heptose and ADP-L-glycero-beta-D-manno-heptose via an epimerization at carbon 6 of the heptose. The polypeptide is ADP-L-glycero-D-manno-heptose-6-epimerase (Polaromonas naphthalenivorans (strain CJ2)).